We begin with the raw amino-acid sequence, 267 residues long: Adenosine 5'-phosphosulfate reductase (267 aa).

The interval Met1–Asp29 is disordered. Positions Glu11 to Ser25 are enriched in polar residues. Positions 139, 140, 228, and 231 each coordinate [4Fe-4S] cluster. The active-site Nucleophile; cysteine thiosulfonate intermediate is the Cys256.

Belongs to the PAPS reductase family. CysH subfamily. The cofactor is [4Fe-4S] cluster.

It is found in the cytoplasm. It catalyses the reaction [thioredoxin]-disulfide + sulfite + AMP + 2 H(+) = adenosine 5'-phosphosulfate + [thioredoxin]-dithiol. It participates in sulfur metabolism; hydrogen sulfide biosynthesis; sulfite from sulfate. In terms of biological role, catalyzes the formation of sulfite from adenosine 5'-phosphosulfate (APS) using thioredoxin as an electron donor. The sequence is that of Adenosine 5'-phosphosulfate reductase from Pseudomonas aeruginosa (strain LESB58).